Consider the following 264-residue polypeptide: Thymidylate synthase (264 aa).

Arg-21 is a binding site for dUMP. A (6R)-5,10-methylene-5,6,7,8-tetrahydrofolate-binding site is contributed by His-51. 126-127 (RR) contacts dUMP. Cys-146 functions as the Nucleophile in the catalytic mechanism. Residues 166–169 (RSAD), Asn-177, and 207–209 (HLY) each bind dUMP. Asp-169 is a binding site for (6R)-5,10-methylene-5,6,7,8-tetrahydrofolate. Ser-263 is a (6R)-5,10-methylene-5,6,7,8-tetrahydrofolate binding site.

This sequence belongs to the thymidylate synthase family. Bacterial-type ThyA subfamily. In terms of assembly, homodimer.

It localises to the cytoplasm. It carries out the reaction dUMP + (6R)-5,10-methylene-5,6,7,8-tetrahydrofolate = 7,8-dihydrofolate + dTMP. Its pathway is pyrimidine metabolism; dTTP biosynthesis. Its function is as follows. Catalyzes the reductive methylation of 2'-deoxyuridine-5'-monophosphate (dUMP) to 2'-deoxythymidine-5'-monophosphate (dTMP) while utilizing 5,10-methylenetetrahydrofolate (mTHF) as the methyl donor and reductant in the reaction, yielding dihydrofolate (DHF) as a by-product. This enzymatic reaction provides an intracellular de novo source of dTMP, an essential precursor for DNA biosynthesis. In Laribacter hongkongensis (strain HLHK9), this protein is Thymidylate synthase.